Reading from the N-terminus, the 86-residue chain is Cell division topological specificity factor (86 aa).

Belongs to the MinE family.

In terms of biological role, prevents the cell division inhibition by proteins MinC and MinD at internal division sites while permitting inhibition at polar sites. This ensures cell division at the proper site by restricting the formation of a division septum at the midpoint of the long axis of the cell. The protein is Cell division topological specificity factor of Stenotrophomonas maltophilia (strain R551-3).